We begin with the raw amino-acid sequence, 453 residues long: Probable exopolygalacturonase B (453 aa).

An N-terminal signal peptide occupies residues 1-16 (MKFLALAALFASTVSS). 2 N-linked (GlcNAc...) asparagine glycosylation sites follow: Asn185 and Asn225. Residue Asp255 is the Proton donor of the active site. Cys257 and Cys274 are disulfide-bonded. Residues Asn263 and Asn275 are each glycosylated (N-linked (GlcNAc...) asparagine). Residue His278 is part of the active site. PbH1 repeat units lie at residues 295–316 (IENVWIENVTLLNGENGARLKA) and 327–348 (INNVTYKNIHVENTDNPIVLDQ). Residues Asn302, Asn329, Asn354, and Asn366 are each glycosylated (N-linked (GlcNAc...) asparagine). The stretch at 362–405 (PSRVNFTNIVFENIYGTSSGKHGKVVADLTCSPNAVCSGIRLKN) is one PbH1 3 repeat. Residues Cys392 and Cys398 are joined by a disulfide bond. An N-linked (GlcNAc...) asparagine glycan is attached at Asn436.

The protein belongs to the glycosyl hydrolase 28 family.

It is found in the secreted. It carries out the reaction [(1-&gt;4)-alpha-D-galacturonosyl](n) + H2O = alpha-D-galacturonate + [(1-&gt;4)-alpha-D-galacturonosyl](n-1). Specific in hydrolyzing the terminal glycosidic bond of polygalacturonic acid and oligogalacturonates. In Neosartorya fischeri (strain ATCC 1020 / DSM 3700 / CBS 544.65 / FGSC A1164 / JCM 1740 / NRRL 181 / WB 181) (Aspergillus fischerianus), this protein is Probable exopolygalacturonase B (pgxB).